The sequence spans 140 residues: Probable deoxyuridine 5'-triphosphate nucleotidohydrolase (140 aa).

Residues 62–64 (RSG), 76–79 (GVID), R130, and 135–136 (FG) each bind substrate.

Belongs to the dUTPase family. In terms of assembly, homotrimer. The cofactor is Mg(2+).

The catalysed reaction is dUTP + H2O = dUMP + diphosphate + H(+). It functions in the pathway pyrimidine metabolism; dUMP biosynthesis; dUMP from dCTP (dUTP route): step 2/2. In terms of biological role, this enzyme is involved in nucleotide metabolism: it produces dUMP, the immediate precursor of thymidine nucleotides and it decreases the intracellular concentration of dUTP so that uracil cannot be incorporated into DNA. In Schizosaccharomyces pombe (strain 972 / ATCC 24843) (Fission yeast), this protein is Probable deoxyuridine 5'-triphosphate nucleotidohydrolase.